Consider the following 1093-residue polypeptide: Isomaltosyltransferase (1093 aa).

Residues 1–29 (MYVRNLTGSFRFSLSFLLCFCLFVPSIYA) form the signal peptide. Asp-566 functions as the Nucleophile in the catalytic mechanism. The active site involves Glu-569. Asp-631 (proton donor) is an active-site residue. The CBM6 domain maps to 968–1091 (VEYEAEFGVQ…GINFDNIAIV (124 aa)).

Belongs to the glycosyl hydrolase 31 family.

Its subcellular location is the secreted. It carries out the reaction 2 alpha-isomaltosyl-(1-&gt;4)-D-maltotriose = alpha-isomaltosyl-(1-&gt;3)-alpha-isomaltosyl-(1-&gt;4)-D-maltotriose + D-maltotriose. It catalyses the reaction alpha-isomaltosyl-(1-&gt;3)-alpha-isomaltosyl-(1-&gt;4)-D-maltotriose = cyclobis-(1-&gt;3)-alpha-D-isomaltosyl + D-maltotriose. Its activity is regulated as follows. Strongly inhibited by Hg(2+) and moderately inhibited by Cu(2+) and Pb(2+). Other metal ions, Tris and EDTA have almost no effects. Glycosyltransferase involved, together with CtsZ, in the conversion of alpha-1,4-glucan into a cyclic tetrasaccharide (CTS) constructed from four alpha-glucopyranosyl residues. Catalyzes the alpha-(1-&gt;3) transfer of the isomaltosyl moiety of alpha-isomaltosyl-(1-&gt;4)-D-maltotriose to another alpha-isomaltosyl-(1-&gt;4)-D-maltotriose, resulting in alpha-isomaltosyl-(1-&gt;3)-alpha-isomaltosyl-alpha-(1-&gt;4)-maltotriose formation. In addition, the enzyme catalyzes the intramolecular cyclization of the product, generating the cyclic tetrasaccharide cyclobis-(1-&gt;6)-alpha-nigerosyl. This is Isomaltosyltransferase from Sporosarcina globispora (Bacillus globisporus).